Here is a 243-residue protein sequence, read N- to C-terminus: Isoprenyl transferase 2 (243 aa).

The active site involves Asp-23. Asp-23 is a Mg(2+) binding site. Substrate is bound by residues 24–27 (GNGR), Trp-28, Arg-36, His-40, and 68–70 (STE). The Proton acceptor role is filled by Asn-71. Substrate-binding positions include Trp-72, Arg-74, Arg-191, and 197–199 (RTS). A Mg(2+)-binding site is contributed by Glu-210.

Belongs to the UPP synthase family. In terms of assembly, homodimer. Mg(2+) serves as cofactor.

In terms of biological role, catalyzes the condensation of isopentenyl diphosphate (IPP) with allylic pyrophosphates generating different type of terpenoids. The sequence is that of Isoprenyl transferase 2 from Corynebacterium efficiens (strain DSM 44549 / YS-314 / AJ 12310 / JCM 11189 / NBRC 100395).